Consider the following 508-residue polypeptide: 2-isopropylmalate synthase (508 aa).

The Pyruvate carboxyltransferase domain occupies 5 to 267 (IKIFDTTLRD…THRIDTTQIY (263 aa)). Mn(2+) contacts are provided by aspartate 14, histidine 202, histidine 204, and asparagine 238. Positions 390 to 508 (VIDSFQINSG…SEIGESIISQ (119 aa)) are regulatory domain.

It belongs to the alpha-IPM synthase/homocitrate synthase family. LeuA type 1 subfamily. As to quaternary structure, homodimer. Requires Mn(2+) as cofactor.

It localises to the cytoplasm. It carries out the reaction 3-methyl-2-oxobutanoate + acetyl-CoA + H2O = (2S)-2-isopropylmalate + CoA + H(+). Its pathway is amino-acid biosynthesis; L-leucine biosynthesis; L-leucine from 3-methyl-2-oxobutanoate: step 1/4. In terms of biological role, catalyzes the condensation of the acetyl group of acetyl-CoA with 3-methyl-2-oxobutanoate (2-ketoisovalerate) to form 3-carboxy-3-hydroxy-4-methylpentanoate (2-isopropylmalate). The chain is 2-isopropylmalate synthase from Ruminiclostridium cellulolyticum (strain ATCC 35319 / DSM 5812 / JCM 6584 / H10) (Clostridium cellulolyticum).